The chain runs to 475 residues: MASFGMNWNQKSPVFWDWENPAPFGPNTMENPKSIPHPEPRGVVVAAANHGSTNSSGGTFTSSSELANGSSKSSLSASFDSSSKLGNSLEFRFASVKGHGKNMCKDGEAGRVEDSGTSPAVAVSHGEPVIGLKLGKRTYFENVCGGQNVKSSSAASGVTCPSTVVKKMKVSQQSTQSSYCQVEGCKVDLSSAREYHRKHKVCEAHSKAPKVIVSGLERRFCQQCSRFHGLAEFDQKKKSCRRRLSDHNARRRKPQQEAISFGSSRLATMFYDARQQTDIYFGQSPFGQVRSNAISSCDNLGGFKFTEAKLPWMKPMKTIGLEDLNFSTLQMPGNVVSHTVHHHDFDGLIPFKGNTPKVLNQGVDPACAVVSSNSNGAPDLRRALSLLSSDSWGPADVQAGSQVHPGGVMPPLAVAAATVTAPTNPVSVMHALHPSTGGGGFWQDGDDPPPLDHASQAQAFMHPGNGSSSGYGHLH.

Residues N49–S73 are disordered. Residues G51–S73 are compositionally biased toward low complexity. The segment at S177–P254 adopts an SBP-type zinc-finger fold. Zn(2+) is bound by residues C180, C185, C202, H205, C221, C224, H228, and C240. Residues K237–K253 carry the Bipartite nuclear localization signal motif. The segment at G437–H475 is disordered. Residues N465 to H475 show a composition bias toward polar residues.

Expressed in young panicles.

The protein resides in the nucleus. Its function is as follows. Trans-acting factor that binds specifically to the consensus nucleotide sequence 5'-TNCGTACAA-3'. May be involved in panicle development. In Oryza sativa subsp. japonica (Rice), this protein is Squamosa promoter-binding-like protein 12 (SPL12).